A 299-amino-acid polypeptide reads, in one-letter code: Inactive recombination-promoting nuclease-like protein RpnE (299 aa).

Belongs to the Rpn/YhgA-like nuclease family.

Its function is as follows. Upon expression has no effect on RecA-independent DNA recombination, cell viability or DNA damage. In Escherichia coli (strain K12), this protein is Inactive recombination-promoting nuclease-like protein RpnE (yfaD).